Here is a 495-residue protein sequence, read N- to C-terminus: Lysine--tRNA ligase (495 aa).

Residues Glu406 and Glu413 each coordinate Mg(2+).

This sequence belongs to the class-II aminoacyl-tRNA synthetase family. As to quaternary structure, homodimer. Requires Mg(2+) as cofactor.

It localises to the cytoplasm. It catalyses the reaction tRNA(Lys) + L-lysine + ATP = L-lysyl-tRNA(Lys) + AMP + diphosphate. The protein is Lysine--tRNA ligase of Staphylococcus saprophyticus subsp. saprophyticus (strain ATCC 15305 / DSM 20229 / NCIMB 8711 / NCTC 7292 / S-41).